Reading from the N-terminus, the 901-residue chain is Vacuolar import and degradation protein 22 (901 aa).

Residues 1–10 (MRAMDTQVQS) are compositionally biased toward polar residues. A disordered region spans residues 1–54 (MRAMDTQVQSAERGLVLPPMNSTVSSATAATTATNTDTDTDGDRDEERESLAED). An N-linked (GlcNAc...) asparagine glycan is attached at N21. Residues 27-37 (ATAATTATNTD) show a composition bias toward low complexity. The BED-type zinc-finger motif lies at 66-122 (RDRSRYLGHFLGVDKMLEAVKCKYCGVIIRRQGNSISMAEASQTHLWSTHKIDPNAN). Residues C87, C90, H110, and H115 each coordinate Zn(2+). 2 N-linked (GlcNAc...) asparagine glycosylation sites follow: N242 and N291. Residues 381-401 (YYHNCIISIINSAILPLFGTP) traverse the membrane as a helical segment. N540, N645, N649, N652, N662, N669, N673, N688, and N722 each carry an N-linked (GlcNAc...) asparagine glycan. Positions 646–677 (NSHNTSNHSNMNIHTDNQTNNINNRSGNNSDN) are enriched in low complexity. The interval 646–727 (NSHNTSNHSN…NSNNNLSFGS (82 aa)) is disordered. A compositionally biased stretch (basic and acidic residues) spans 679–688 (DNEHDNDNDN). Residues 718 to 727 (NSNNNLSFGS) are compositionally biased toward low complexity.

It belongs to the VID22 family. Glycosylated.

The protein resides in the cell membrane. Its subcellular location is the nucleus. Functionally, has a role in the negative regulation of gluconeogenesis. Imports fructose-1,6-bisphosphatase (FBPase) into the intermediate vacuole import and degradation (Vid) vesicles. This is an indirect role and requires cyclophilin A. The protein is Vacuolar import and degradation protein 22 (VID22) of Saccharomyces cerevisiae (strain ATCC 204508 / S288c) (Baker's yeast).